The following is a 943-amino-acid chain: Isoleucine--tRNA ligase (943 aa).

Residues 58–68 carry the 'HIGH' region motif; the sequence is PYANGTIHIGH. E567 lines the L-isoleucyl-5'-AMP pocket. The 'KMSKS' region motif lies at 608–612; sequence KMSKS. K611 provides a ligand contact to ATP. 4 residues coordinate Zn(2+): C906, C909, C926, and C929.

The protein belongs to the class-I aminoacyl-tRNA synthetase family. IleS type 1 subfamily. Monomer. The cofactor is Zn(2+).

It localises to the cytoplasm. It carries out the reaction tRNA(Ile) + L-isoleucine + ATP = L-isoleucyl-tRNA(Ile) + AMP + diphosphate. In terms of biological role, catalyzes the attachment of isoleucine to tRNA(Ile). As IleRS can inadvertently accommodate and process structurally similar amino acids such as valine, to avoid such errors it has two additional distinct tRNA(Ile)-dependent editing activities. One activity is designated as 'pretransfer' editing and involves the hydrolysis of activated Val-AMP. The other activity is designated 'posttransfer' editing and involves deacylation of mischarged Val-tRNA(Ile). This is Isoleucine--tRNA ligase from Pseudomonas fluorescens (strain SBW25).